Reading from the N-terminus, the 168-residue chain is Protein GrpE (168 aa).

This sequence belongs to the GrpE family. In terms of assembly, homodimer.

The protein resides in the cytoplasm. Functionally, participates actively in the response to hyperosmotic and heat shock by preventing the aggregation of stress-denatured proteins, in association with DnaK and GrpE. It is the nucleotide exchange factor for DnaK and may function as a thermosensor. Unfolded proteins bind initially to DnaJ; upon interaction with the DnaJ-bound protein, DnaK hydrolyzes its bound ATP, resulting in the formation of a stable complex. GrpE releases ADP from DnaK; ATP binding to DnaK triggers the release of the substrate protein, thus completing the reaction cycle. Several rounds of ATP-dependent interactions between DnaJ, DnaK and GrpE are required for fully efficient folding. This is Protein GrpE from Thermotoga neapolitana (strain ATCC 49049 / DSM 4359 / NBRC 107923 / NS-E).